A 777-amino-acid chain; its full sequence is Glucocorticoid receptor (777 aa).

Residues 1 to 14 (MDSKESLTPGKEEN) show a composition bias toward basic and acidic residues. A disordered region spans residues 1–22 (MDSKESLTPGKEENPSSVLTQE). The modulating stretch occupies residues 1–420 (MDSKESLTPG…TATTGPPPKL (420 aa)). At T8 the chain carries Phosphothreonine. Residue R23 is modified to Omega-N-methylarginine. Phosphoserine is present on residues S45, S113, S134, and S141. The segment at 130 to 183 (NRSTSVPENPKSSASSSVSAAPKEKEFPKTHSDVSSEQQNLKGQTGTNGGNAKL) is disordered. Residues 134-150 (SVPENPKSSASSSVSAA) show a composition bias toward low complexity. Residues 151 to 163 (PKEKEFPKTHSDV) show a composition bias toward basic and acidic residues. A compositionally biased stretch (polar residues) spans 164 to 174 (SSEQQNLKGQT). Phosphoserine is present on residues S203, S211, and S226. K258 is covalently cross-linked (Glycyl lysine isopeptide (Lys-Gly) (interchain with G-Cter in SUMO2)). S267 carries the post-translational modification Phosphoserine. Residues K277 and K293 each participate in a glycyl lysine isopeptide (Lys-Gly) (interchain with G-Cter in SUMO); alternate cross-link. Glycyl lysine isopeptide (Lys-Gly) (interchain with G-Cter in SUMO2); alternate cross-links involve residues K277 and K293. The segment covering 394 to 414 (SSPSMRPDVSSPPSSSSTATT) has biased composition (low complexity). Residues 394 to 415 (SSPSMRPDVSSPPSSSSTATTG) form a disordered region. Position 404 is a phosphoserine (S404). A Glycyl lysine isopeptide (Lys-Gly) (interchain with G-Cter in ubiquitin) cross-link involves residue K419. 2 NR C4-type zinc fingers span residues 421–441 (CLVCSDEASGCHYGVLTCGSC) and 457–481 (CAGRNDCIIDKIRRKNCPACRYRKC). The nuclear receptor DNA-binding region spans 421-486 (CLVCSDEASG…RYRKCLQAGM (66 aa)). N6-acetyllysine is present on residues K480, K492, K494, and K495. The tract at residues 485–777 (GMNLEARKTK…NIRKLLFHQK (293 aa)) is interaction with CLOCK. Residues 487–523 (NLEARKTKKKIKGIQQATTGVSQETSENPANKTIVPA) are hinge. The NR LBD domain occupies 524–758 (TLPQLTPTLV…FPEMLAEIIT (235 aa)). The tract at residues 532–697 (LVSLLEVIEP…EIRMTYIKEL (166 aa)) is interaction with CRY1. K703 is covalently cross-linked (Glycyl lysine isopeptide (Lys-Gly) (interchain with G-Cter in SUMO)).

The protein belongs to the nuclear hormone receptor family. NR3 subfamily. As to quaternary structure, heteromultimeric cytoplasmic complex with HSP90AA1, HSPA1A/HSPA1B, and FKBP5 or another immunophilin such as PPID, STIP1, or the immunophilin homolog PPP5C. Upon ligand binding FKBP5 dissociates from the complex and FKBP4 takes its place, thereby linking the complex to dynein and mediating transport to the nucleus, where the complex dissociates. Probably forms a complex composed of chaperones HSP90 and HSP70, co-chaperones CDC37, PPP5C, TSC1 and client protein TSC2, CDK4, AKT, RAF1 and NR3C1; this complex does not contain co-chaperones STIP1/HOP and PTGES3/p23. Directly interacts with UNC45A. Binds to DNA as a homodimer, and as heterodimer with NR3C2 or the retinoid X receptor. Binds STAT5A and STAT5B homodimers and heterodimers. Interacts with NRIP1, POU2F1, POU2F2 and TRIM28. Interacts with several coactivator complexes, including the SMARCA4 complex, CREBBP/EP300, TADA2L (Ada complex) and p160 coactivators such as NCOA2 and NCOA6. Interaction with BAG1 inhibits transactivation. Interacts with HEXIM1 and TGFB1I1. Interacts with NCOA1. Interacts with NCOA3, SMARCA4, SMARCC1, SMARCD1, and SMARCE1. Interacts with CLOCK, CRY1 and CRY2 in a ligand-dependent fashion. Interacts with CIART. Interacts with RWDD3. Interacts with UBE2I/UBC9 and this interaction is enhanced in the presence of RWDD3. Interacts with GRIP1. Interacts with NR4A3 (via nuclear receptor DNA-binding domain), represses transcription activity of NR4A3 on the POMC promoter Nur response element (NurRE). Directly interacts with PNRC2 to attract and form a complex with UPF1 and DCP1A; the interaction leads to rapid mRNA degradation. Interacts with GSK3B. Interacts with FNIP1 and FNIP2. Interacts (via C-terminus) with HNRNPU (via C-terminus). Interacts with MCM3AP. Interacts (via domain NR LBD) with HSP90AA1 and HSP90AB1. In the absence of hormonal ligand, interacts with TACC1. Interacts (via NR LBD domain) with ZNF764 (via KRAB domain); the interaction regulates transcription factor activity of NR3C1 by directing its actions toward certain biologic pathways. In terms of processing, acetylation by CLOCK reduces its binding to glucocorticoid response elements and its transcriptional activity. Increased proteasome-mediated degradation in response to glucocorticoids. Post-translationally, phosphorylated in the absence of hormone; becomes hyperphosphorylated in the presence of glucocorticoid. The Ser-203, Ser-226 and Ser-404-phosphorylated forms are mainly cytoplasmic, and the Ser-211-phosphorylated form is nuclear. Phosphorylation at Ser-211 increases transcriptional activity. Phosphorylation at Ser-203, Ser-226 and Ser-404 decreases signaling capacity. Phosphorylation at Ser-404 may protect from glucocorticoid-induced apoptosis. Phosphorylation at Ser-203 and Ser-211 is not required in regulation of chromosome segregation. May be dephosphorylated by PPP5C, attenuates NR3C1 action. In terms of processing, ubiquitinated by UBR5, leading to its degradation: UBR5 specifically recognizes and binds ligand-bound NR3C1 when it is not associated with coactivators (NCOAs). In presence of NCOAs, the UBR5-degron is not accessible, preventing its ubiquitination and degradation. Sumoylation at Lys-277 and Lys-293 negatively regulates its transcriptional activity. Sumoylation at Lys-703 positively regulates its transcriptional activity in the presence of RWDD3. Sumoylation at Lys-277 and Lys-293 is dispensable whereas sumoylation at Lys-703 is critical for the stimulatory effect of RWDD3 on its transcriptional activity. Heat shock increases sumoylation in a RWDD3-dependent manner.

The protein localises to the cytoplasm. Its subcellular location is the nucleus. It localises to the mitochondrion. It is found in the cytoskeleton. The protein resides in the spindle. The protein localises to the microtubule organizing center. Its subcellular location is the centrosome. It localises to the chromosome. It is found in the nucleoplasm. Receptor for glucocorticoids (GC). Has a dual mode of action: as a transcription factor that binds to glucocorticoid response elements (GRE), both for nuclear and mitochondrial DNA, and as a modulator of other transcription factors. Affects inflammatory responses, cellular proliferation and differentiation in target tissues. Involved in chromatin remodeling. Plays a role in rapid mRNA degradation by binding to the 5' UTR of target mRNAs and interacting with PNRC2 in a ligand-dependent manner which recruits the RNA helicase UPF1 and the mRNA-decapping enzyme DCP1A, leading to RNA decay. Could act as a coactivator for STAT5-dependent transcription upon growth hormone (GH) stimulation and could reveal an essential role of hepatic GR in the control of body growth. Mediates glucocorticoid-induced apoptosis. Promotes accurate chromosome segregation during mitosis. May act as a tumor suppressor. May play a negative role in adipogenesis through the regulation of lipolytic and antilipogenic gene expression. This chain is Glucocorticoid receptor (NR3C1), found in Saguinus oedipus (Cotton-top tamarin).